The primary structure comprises 249 residues: Tryptophan synthase alpha chain (249 aa).

Active-site proton acceptor residues include glutamate 43 and aspartate 54.

Belongs to the TrpA family. As to quaternary structure, tetramer of two alpha and two beta chains.

The catalysed reaction is (1S,2R)-1-C-(indol-3-yl)glycerol 3-phosphate + L-serine = D-glyceraldehyde 3-phosphate + L-tryptophan + H2O. The protein operates within amino-acid biosynthesis; L-tryptophan biosynthesis; L-tryptophan from chorismate: step 5/5. The alpha subunit is responsible for the aldol cleavage of indoleglycerol phosphate to indole and glyceraldehyde 3-phosphate. This chain is Tryptophan synthase alpha chain, found in Campylobacter jejuni subsp. jejuni serotype O:6 (strain 81116 / NCTC 11828).